Consider the following 489-residue polypeptide: Metal cation symporter ZIP14 (489 aa).

A signal peptide spans 1–28 (MKRLHPALPSCLLLVLFGIWRTAPQTHA). At 29–155 (SSAGLPPLSA…PSAIEVWGYG (127 aa)) the chain is on the extracellular side. Residues Asn-52, Asn-75, Asn-85, and Asn-100 are each glycosylated (N-linked (GlcNAc...) asparagine). The helical transmembrane segment at 156 to 176 (FLCVTVISLCSLMGASVVPFM) threads the bilayer. The Cytoplasmic portion of the chain corresponds to 177–184 (KKTFYKRL). A helical membrane pass occupies residues 185–205 (LLYFIALAIGTLYSNALFQLI). The Extracellular portion of the chain corresponds to 206–221 (PEAFGFNPQDNYVSKS). The chain crosses the membrane as a helical span at residues 222–242 (AVVFGGFYLFFFTEKILKMLL). At 243-349 (KQKNEHHHGH…SDGLHNFIDG (107 aa)) the chain is on the cytoplasmic side. The HHHGHXHX-motif motif lies at 248 to 255 (HHHGHNHF). Residues 350–370 (LAIGASFTVSVFQGISTSVAI) form a helical membrane-spanning segment. Over 371 to 394 (LCEEFPHELGDFVILLNAGMSIQQ) the chain is Extracellular. Residues 373–378 (EEFPHE) carry the XEXPHE-motif motif. Residues 395-415 (ALFFNFLSACCCYLGLAFGIL) form a helical membrane-spanning segment. Residues 416-421 (AGSHFS) are Cytoplasmic-facing. Residues 422 to 442 (ANWIFALAGGMFLYIALADMF) traverse the membrane as a helical segment. Topologically, residues 443-457 (PEMNEVCQEDEKNDS) are extracellular. The chain crosses the membrane as a helical span at residues 458-478 (FLVPFVIQNLGLLTGFSIMLV). Topologically, residues 479-489 (LTMYSGQIQIG) are cytoplasmic.

It belongs to the ZIP transporter (TC 2.A.5) family. Homotrimer. Post-translationally, ubiquitinated. Ubiquitination occurs upon iron depletion. The ubiquitinated form undergoes proteasomal degradation. In terms of processing, N-glycosylated. N-glycosylation at Asn-100 is required for iron-regulated extraction of the transporter from membranes and subsequent proteasomal degradation. Widely expressed. Highly and transiently expressed during the early stage of adipocyte differentiation. Strongly expressed in liver, preadipocyte, duodenum and jejunum, moderately in brain, heart, skeletal muscle, spleen, pancreas, kidney and white adipose cells. Expression is almost undetectable in lung, testis and brown adipose cells. Expressed by chondrocytes and pituitary cells. In terms of tissue distribution, more strongly expressed in brain. As to expression, more strongly expressed in liver, kidney and duodenum.

It localises to the cell membrane. It is found in the apical cell membrane. Its subcellular location is the basolateral cell membrane. The protein resides in the early endosome membrane. The protein localises to the late endosome membrane. It localises to the lysosome membrane. The catalysed reaction is Zn(2+)(out) + 2 hydrogencarbonate(out) = Zn(2+)(in) + 2 hydrogencarbonate(in). It carries out the reaction Mn(2+)(out) + 2 hydrogencarbonate(out) = Mn(2+)(in) + 2 hydrogencarbonate(in). It catalyses the reaction Fe(2+)(out) + 2 hydrogencarbonate(out) = Fe(2+)(in) + 2 hydrogencarbonate(in). The enzyme catalyses Cd(2+)(out) + 2 hydrogencarbonate(out) = Cd(2+)(in) + 2 hydrogencarbonate(in). With respect to regulation, inhibited by cyanide and therefore dependent of an energy source. Inhibited by DIDS/4,4'-diisothiocyanatostilbene-2,2'-disulfonic acid, an inhibitor hydrogencarbonate-dependent transporters. Its function is as follows. Electroneutral transporter of the plasma membrane mediating the cellular uptake of the divalent metal cations zinc, manganese and iron that are important for tissue homeostasis, metabolism, development and immunity. Functions as an energy-dependent symporter, transporting through the membranes an electroneutral complex composed of a divalent metal cation and two bicarbonate anions. Beside these endogenous cellular substrates, can also import cadmium a non-essential metal which is cytotoxic and carcinogenic. Controls the cellular uptake by the intestinal epithelium of systemic zinc, which is in turn required to maintain tight junctions and the intestinal permeability. Modifies the activity of zinc-dependent phosphodiesterases, thereby indirectly regulating G protein-coupled receptor signaling pathways important for gluconeogenesis and chondrocyte differentiation. Regulates insulin receptor signaling, glucose uptake, glycogen synthesis and gluconeogenesis in hepatocytes through the zinc-dependent intracellular catabolism of insulin. Through zinc cellular uptake also plays a role in the adaptation of cells to endoplasmic reticulum stress. Major manganese transporter of the basolateral membrane of intestinal epithelial cells, it plays a central role in manganese systemic homeostasis through intestinal manganese uptake. Also involved in manganese extracellular uptake by cells of the blood-brain barrier. May also play a role in manganese and zinc homeostasis participating in their elimination from the blood through the hepatobiliary excretion. Also functions in the extracellular uptake of free iron. May also function intracellularly and mediate the transport from endosomes to cytosol of iron endocytosed by transferrin. Plays a role in innate immunity by regulating the expression of cytokines by activated macrophages. The polypeptide is Metal cation symporter ZIP14 (Mus musculus (Mouse)).